The chain runs to 242 residues: DNA repair protein RecO (242 aa).

It belongs to the RecO family. Monomer.

Involved in DNA repair and RecF pathway recombination. This Shigella flexneri protein is DNA repair protein RecO.